A 73-amino-acid chain; its full sequence is MKKDIHPEYHIIDVKMTDGTVIQMRSTWGAEGDQLSLDIDPSVHPAWTGGTSRLLDTGGRVSKFKKKYEGLGF.

Belongs to the bacterial ribosomal protein bL31 family. Type A subfamily. As to quaternary structure, part of the 50S ribosomal subunit.

In terms of biological role, binds the 23S rRNA. The sequence is that of Large ribosomal subunit protein bL31 from Dinoroseobacter shibae (strain DSM 16493 / NCIMB 14021 / DFL 12).